The following is a 174-amino-acid chain: Large ribosomal subunit protein uL10 (174 aa).

Belongs to the universal ribosomal protein uL10 family. As to quaternary structure, part of the ribosomal stalk of the 50S ribosomal subunit. The N-terminus interacts with L11 and the large rRNA to form the base of the stalk. The C-terminus forms an elongated spine to which L12 dimers bind in a sequential fashion forming a multimeric L10(L12)X complex.

Forms part of the ribosomal stalk, playing a central role in the interaction of the ribosome with GTP-bound translation factors. The sequence is that of Large ribosomal subunit protein uL10 from Pelobacter propionicus (strain DSM 2379 / NBRC 103807 / OttBd1).